Reading from the N-terminus, the 103-residue chain is Pyrimidine/purine nucleoside phosphorylase (103 aa).

This sequence belongs to the nucleoside phosphorylase PpnP family.

The catalysed reaction is a purine D-ribonucleoside + phosphate = a purine nucleobase + alpha-D-ribose 1-phosphate. It carries out the reaction adenosine + phosphate = alpha-D-ribose 1-phosphate + adenine. The enzyme catalyses cytidine + phosphate = cytosine + alpha-D-ribose 1-phosphate. It catalyses the reaction guanosine + phosphate = alpha-D-ribose 1-phosphate + guanine. The catalysed reaction is inosine + phosphate = alpha-D-ribose 1-phosphate + hypoxanthine. It carries out the reaction thymidine + phosphate = 2-deoxy-alpha-D-ribose 1-phosphate + thymine. The enzyme catalyses uridine + phosphate = alpha-D-ribose 1-phosphate + uracil. It catalyses the reaction xanthosine + phosphate = alpha-D-ribose 1-phosphate + xanthine. Functionally, catalyzes the phosphorolysis of diverse nucleosides, yielding D-ribose 1-phosphate and the respective free bases. Can use uridine, adenosine, guanosine, cytidine, thymidine, inosine and xanthosine as substrates. Also catalyzes the reverse reactions. In Cupriavidus metallidurans (strain ATCC 43123 / DSM 2839 / NBRC 102507 / CH34) (Ralstonia metallidurans), this protein is Pyrimidine/purine nucleoside phosphorylase.